We begin with the raw amino-acid sequence, 298 residues long: Probable 2-(5''-triphosphoribosyl)-3'-dephosphocoenzyme-A synthase 2 (298 aa).

The protein belongs to the CitG/MdcB family.

The enzyme catalyses 3'-dephospho-CoA + ATP = 2'-(5''-triphospho-alpha-D-ribosyl)-3'-dephospho-CoA + adenine. In Salmonella paratyphi A (strain ATCC 9150 / SARB42), this protein is Probable 2-(5''-triphosphoribosyl)-3'-dephosphocoenzyme-A synthase 2.